The chain runs to 374 residues: Peptide chain release factor 2 (374 aa).

Position 256 is an N5-methylglutamine (Gln-256).

The protein belongs to the prokaryotic/mitochondrial release factor family. Methylated by PrmC. Methylation increases the termination efficiency of RF2.

It localises to the cytoplasm. Peptide chain release factor 2 directs the termination of translation in response to the peptide chain termination codons UGA and UAA. The polypeptide is Peptide chain release factor 2 (Mycobacterium leprae (strain Br4923)).